Consider the following 491-residue polypeptide: Keratin, type I cytoskeletal 24 (491 aa).

The segment at 1 to 23 (MFCSAQKGSCSSRVSSSGAVGSR) is disordered. The tract at residues 1–117 (MFCSAQKGSC…GYDGGLLSGS (117 aa)) is head. Residues 8 to 23 (GSCSSRVSSSGAVGSR) show a composition bias toward low complexity. A coil 1A region spans residues 118–153 (EKQTMQGLNDRLANYLDKVRALEEANTDLETKIKDW). The region spanning 118–432 (EKQTMQGLND…RLLNGDGGGC (315 aa)) is the IF rod domain. The tract at residues 154–174 (YGRHGSGKDGPGRDYSQYCSV) is linker 1. A coil 1B region spans residues 175–266 (IEDLKNQIIS…KNHEEEMKCL (92 aa)). The tract at residues 267 to 289 (QGSSGGDVTVEMNATPGTDLTKL) is linker 12. A coil 2 region spans residues 290 to 428 (LNDMRAQYEA…ETYRRLLNGD (139 aa)). The tail stretch occupies residues 429-491 (GGGCDYRNLV…VSNISEVKIK (63 aa)).

Belongs to the intermediate filament family. Heterotetramer of two type I and two type II keratins.

The sequence is that of Keratin, type I cytoskeletal 24 (Krt24) from Rattus norvegicus (Rat).